The following is an 81-amino-acid chain: Photosystem I iron-sulfur center (81 aa).

2 4Fe-4S ferredoxin-type domains span residues 2-31 (SHSVKIYDTCIGCTQCVRACPLDVLEMVPW) and 39-68 (IASSPRTEDCVGCKRCETACPTDFLSIRVY). The [4Fe-4S] cluster site is built by Cys-11, Cys-14, Cys-17, Cys-21, Cys-48, Cys-51, Cys-54, and Cys-58.

The cyanobacterial PSI reaction center is composed of one copy each of PsaA,B,C,D,E,F,I,J,K,L,M and X, and forms trimeric complexes. It depends on [4Fe-4S] cluster as a cofactor.

Its subcellular location is the cellular thylakoid membrane. The enzyme catalyses reduced [plastocyanin] + hnu + oxidized [2Fe-2S]-[ferredoxin] = oxidized [plastocyanin] + reduced [2Fe-2S]-[ferredoxin]. Apoprotein for the two 4Fe-4S centers FA and FB of photosystem I (PSI); essential for photochemical activity. FB is the terminal electron acceptor of PSI, donating electrons to ferredoxin. The C-terminus interacts with PsaA/B/D and helps assemble the protein into the PSI complex. Required for binding of PsaD and PsaE to PSI. PSI is a plastocyanin/cytochrome c6-ferredoxin oxidoreductase, converting photonic excitation into a charge separation, which transfers an electron from the donor P700 chlorophyll pair to the spectroscopically characterized acceptors A0, A1, FX, FA and FB in turn. Functionally, mutant proteins with a 3Fe-4S center are unable to reconstitute PSI activity in vivo. The polypeptide is Photosystem I iron-sulfur center (Synechocystis sp. (strain ATCC 27184 / PCC 6803 / Kazusa)).